The primary structure comprises 444 residues: D(2) dopamine receptor (444 aa).

At 1–37 (MDPLNLSWYDDDLERQNWSRPFNGSEGKPDRPHYNYY) the chain is on the extracellular side. N-linked (GlcNAc...) asparagine glycans are attached at residues Asn-5, Asn-17, and Asn-23. A helical transmembrane segment spans residues 38-60 (AMLLTLLIFIIVFGNVLVCMAVS). Over 61 to 70 (REKALQTTTN) the chain is Cytoplasmic. Residues 71-93 (YLIVSLAVADLLVATLVMPWVVY) form a helical membrane-spanning segment. At 94 to 108 (LEVVGEWKFSRIHCD) the chain is on the extracellular side. Residues Cys-107 and Cys-182 are joined by a disulfide bond. A helical membrane pass occupies residues 109–130 (IFVTLDVMMCTASILNLCAISI). Over 131–151 (DRYTAVAMPMLYNTRYSSKRR) the chain is Cytoplasmic. The helical transmembrane segment at 152–172 (VTVMIAIVWVLSFTISCPLLF) threads the bilayer. Residues 173–188 (GLNNTDQNECIIANPA) are Extracellular-facing. The chain crosses the membrane as a helical span at residues 189–213 (FVVYSSIVSFYVPFIVTLLVYIKIY). The segment at 211–374 (KIYIVLRKRR…SQQKEKKATQ (164 aa)) is interaction with PPP1R9B. At 214–374 (IVLRKRRKRV…SQQKEKKATQ (161 aa)) the chain is on the cytoplasmic side. A disordered region spans residues 282–329 (EMLSSTSPPERTRYSPIPPSHHQLTLPDPSHHGLHSNPDSPAKPEKNG). The helical transmembrane segment at 375–396 (MLAIVLGVFIICWLPFFITHIL) threads the bilayer. Residues 397–410 (NIHCDCNIPPVLYS) lie on the Extracellular side of the membrane. The cysteines at positions 400 and 402 are disulfide-linked. Residues 411–432 (AFTWLGYVNSAVNPIIYTTFNI) form a helical membrane-spanning segment. Topologically, residues 433-444 (EFRKAFMKILHC) are cytoplasmic. A lipid anchor (S-palmitoyl cysteine) is attached at Cys-444.

This sequence belongs to the G-protein coupled receptor 1 family. As to quaternary structure, forms homo- and heterooligomers with DRD4. The interaction with DRD4 may modulate agonist-induced downstream signaling. Interacts with CADPS and CADPS2. Interacts with GPRASP1, PPP1R9B and CLIC6. Interacts with ARRB2. Interacts with HTR2A. Interacts with DRD1. In terms of assembly, interacts with KCNA2. Palmitoylated. Palmitoylation which is required for proper localization to the plasma membrane and stability of the receptor could be carried on by ZDHHC4, ZDHHC3 and ZDHHC8. Expressed in retinal hyaloid vessels at postnatal day 6. In terms of tissue distribution, expressed in the pituitary gland, stratum, brain stem and cortex. As to expression, expressed in the brain stem.

The protein localises to the cell membrane. Its subcellular location is the golgi apparatus membrane. Dopamine receptor whose activity is mediated by G proteins which inhibit adenylyl cyclase. Positively regulates postnatal regression of retinal hyaloid vessels via suppression of VEGFR2/KDR activity, downstream of OPN5. The sequence is that of D(2) dopamine receptor (Drd2) from Mus musculus (Mouse).